We begin with the raw amino-acid sequence, 372 residues long: Heat-inducible transcription repressor HrcA (372 aa).

The disordered stretch occupies residues 300–334 (YGRSGAAGEPAGNDPVGEPETESETESQTNDTEPI).

Belongs to the HrcA family.

Functionally, negative regulator of class I heat shock genes (grpE-dnaK-dnaJ and groELS operons). Prevents heat-shock induction of these operons. In Bifidobacterium longum (strain DJO10A), this protein is Heat-inducible transcription repressor HrcA.